A 25-amino-acid polypeptide reads, in one-letter code: Cytochrome c oxidase polypeptide VIIc (25 aa).

The interval 1-25 (SHYSEGPGQNLPFSVQNKXRLLGMM) is disordered.

The protein belongs to the cytochrome c oxidase VIIc family. Component of the cytochrome c oxidase (complex IV, CIV), a multisubunit enzyme composed of 14 subunits. The complex is composed of a catalytic core of 3 subunits MT-CO1, MT-CO2 and MT-CO3, encoded in the mitochondrial DNA, and 11 supernumerary subunits COX4I, COX5A, COX5B, COX6A, COX6B, COX6C, COX7A, COX7B, COX7C, COX8 and NDUFA4, which are encoded in the nuclear genome. The complex exists as a monomer or a dimer and forms supercomplexes (SCs) in the inner mitochondrial membrane with NADH-ubiquinone oxidoreductase (complex I, CI) and ubiquinol-cytochrome c oxidoreductase (cytochrome b-c1 complex, complex III, CIII), resulting in different assemblies (supercomplex SCI(1)III(2)IV(1) and megacomplex MCI(2)III(2)IV(2)). Interacts with RAB5IF.

It is found in the mitochondrion inner membrane. It functions in the pathway energy metabolism; oxidative phosphorylation. Its function is as follows. Component of the cytochrome c oxidase, the last enzyme in the mitochondrial electron transport chain which drives oxidative phosphorylation. The respiratory chain contains 3 multisubunit complexes succinate dehydrogenase (complex II, CII), ubiquinol-cytochrome c oxidoreductase (cytochrome b-c1 complex, complex III, CIII) and cytochrome c oxidase (complex IV, CIV), that cooperate to transfer electrons derived from NADH and succinate to molecular oxygen, creating an electrochemical gradient over the inner membrane that drives transmembrane transport and the ATP synthase. Cytochrome c oxidase is the component of the respiratory chain that catalyzes the reduction of oxygen to water. Electrons originating from reduced cytochrome c in the intermembrane space (IMS) are transferred via the dinuclear copper A center (CU(A)) of subunit 2 and heme A of subunit 1 to the active site in subunit 1, a binuclear center (BNC) formed by heme A3 and copper B (CU(B)). The BNC reduces molecular oxygen to 2 water molecules using 4 electrons from cytochrome c in the IMS and 4 protons from the mitochondrial matrix. This chain is Cytochrome c oxidase polypeptide VIIc, found in Oncorhynchus mykiss (Rainbow trout).